The chain runs to 4118 residues: BEACH domain-containing protein lvsB (4118 aa).

The tract at residues 1-35 (MNRNFNNINNNNNNNNNYHGYQYHQQQQQQNQQQQ) is disordered. A helical transmembrane segment spans residues 198 to 218 (GIPLSFLNFLITILLRILSLP). A compositionally biased stretch (low complexity) spans 236–257 (NFSGNNNNNFNNNNHYFNNNHN). Disordered regions lie at residues 236–267 (NFSGNNNNNFNNNNHYFNNNHNNHNHHYQHHQ), 332–382 (PLSS…SKNN), and 621–644 (ISSSDNNNNNNNNSDGVNDDKNNN). The span at 258-267 (NHNHHYQHHQ) shows a compositional bias: basic residues. Composition is skewed to low complexity over residues 332-381 (PLSS…NSKN) and 621-636 (ISSSDNNNNNNNNSDG). The helical transmembrane segment at 827–847 (YLVLYMIVTEILSLLLELLVP) threads the bilayer. Over residues 1155 to 1170 (NGGSISPSSIINNMNS) the composition is skewed to low complexity. Disordered stretches follow at residues 1155–1213 (NGGS…FNNN), 1599–1622 (ANTTTNSTTASTTTTTTNSTTAVS), 1643–1681 (NSGISRENSLGGRDSIGSNSSSSSSSSNSGVSSGSSTNL), 1928–1968 (GNFL…ISSS), 2015–2044 (STNNNSNNSNNSNSNNNNNNNNTNYNSNSL), 2537–2574 (RRGSSSSSTNSTTNNNNNNSSTTTTSNNNNNNNENNNE), 2702–2741 (FSPSRSKEKEKEKEKEKEKEKEKEKERERERETTNVTSDS), 2754–2791 (DQSNEESSTTDSDSTSDNNNNNNRNSYSGRNIRGNGIN), 2902–3007 (NTNS…NSNE), 3245–3265 (PLIPDLSTPSTPPSPQNTKDQ), and 3348–3418 (KTTA…NIVK). 2 stretches are compositionally biased toward low complexity: residues 1657–1678 (SIGSNSSSSSSSSNSGVSSGSS) and 1935–1968 (SSSNNNLRERSINNNNNNNNNSNNNNNNNSISSS). Residues 2540 to 2571 (SSSSSTNSTTNNNNNNSSTTTTSNNNNNNNEN) are compositionally biased toward low complexity. Positions 2705-2738 (SRSKEKEKEKEKEKEKEKEKEKERERERETTNVT) form a coiled coil. The span at 2706 to 2734 (RSKEKEKEKEKEKEKEKEKEKERERERET) shows a compositional bias: basic and acidic residues. Composition is skewed to low complexity over residues 2758–2791 (EESSTTDSDSTSDNNNNNNRNSYSGRNIRGNGIN) and 2902–2947 (NTNS…NSTN). Over residues 2948-2962 (QTITDTTLSPASSNV) the composition is skewed to polar residues. Composition is skewed to low complexity over residues 2963–2980 (SISNQSTPISNNNNNNNS) and 2988–3006 (SNINIPPTINISDSNSNSN). A BEACH-type PH domain is found at 3303–3479 (KLGEKVNEVF…DRDIVYDLIM (177 aa)). A compositionally biased stretch (low complexity) spans 3357–3411 (SNNNNNNNNNNNNNNNNNNNNSNDTTSSINSTTATNTNTTNTTTTNTTTTTTTTN). Residues 3491 to 3782 (AEVHGNILKM…QIFTKPHPKK (292 aa)) form the BEACH domain. 5 WD repeats span residues 3868 to 3907 (VLNDDIICGDITKNGRLFVTGGTAGTVKVWKRCNNDGTIM), 3924 to 3963 (GHTNSILCVTVSQEYSIIVSGSKDSNCIIWDLNRLTYINS), 3984 to 4027 (TFET…LAKQ), 4029 to 4073 (FVND…KIRT), and 4075 to 4114 (VSKSTITALAVSKDNTQLISGDINGLIECLSSRSFDGYSS).

Its subcellular location is the membrane. It is found in the lysosome. The protein localises to the endosome. Its function is as follows. Involved in negative regulation of lysosome biogenesis, by limiting the heterotypic fusion of early endosomes and postlysosomal compartments. This Dictyostelium discoideum (Social amoeba) protein is BEACH domain-containing protein lvsB (lvsB).